A 95-amino-acid polypeptide reads, in one-letter code: Signal recognition particle 19 kDa protein (95 aa).

This sequence belongs to the SRP19 family. In terms of assembly, part of the signal recognition particle protein translocation system, which is composed of SRP and FtsY. Archaeal SRP consists of a 7S RNA molecule of 300 nucleotides and two protein subunits: SRP54 and SRP19.

It localises to the cytoplasm. In terms of biological role, involved in targeting and insertion of nascent membrane proteins into the cytoplasmic membrane. Binds directly to 7S RNA and mediates binding of the 54 kDa subunit of the SRP. The sequence is that of Signal recognition particle 19 kDa protein from Methanococcoides burtonii (strain DSM 6242 / NBRC 107633 / OCM 468 / ACE-M).